A 249-amino-acid polypeptide reads, in one-letter code: MRLVSLRNATIRHSGTPALENVDFHIDRGEIVTILGPNGSGKSTLLRSIIGALPLSSGTVERAQDLRIGYVPQKLHIDPTLPLTVERFLSLPVRISKTETENALAEAGVPGLRKRQMTGLSGGQMQRVLLARALLSKPDLLILDEATQGLDQPGSAAFYQKIASVRSQIGCAVLMVSHELHVVMAASDRVICLNGHVCCEGAPAQVASAPEYQALFGSGTHGALALYRHEHDHSHDCDHDHAKDEHEHA.

Positions 1 to 219 (MRLVSLRNAT…PEYQALFGSG (219 aa)) constitute an ABC transporter domain. Position 36–43 (36–43 (GPNGSGKS)) interacts with ATP.

The protein belongs to the ABC transporter superfamily. Zinc importer (TC 3.A.1.15.5) family. As to quaternary structure, the complex is composed of two ATP-binding proteins (ZnuC), two transmembrane proteins (ZnuB) and a solute-binding protein (ZnuA).

The protein localises to the cell inner membrane. The enzyme catalyses Zn(2+)(out) + ATP(in) + H2O(in) = Zn(2+)(in) + ADP(in) + phosphate(in) + H(+)(in). Part of the ABC transporter complex ZnuABC involved in zinc import. Responsible for energy coupling to the transport system. This Ruegeria sp. (strain TM1040) (Silicibacter sp.) protein is Zinc import ATP-binding protein ZnuC.